A 262-amino-acid chain; its full sequence is Phosphatidylserine decarboxylase proenzyme (262 aa).

Residues D86, H142, and S226 each act as charge relay system; for autoendoproteolytic cleavage activity in the active site. The active-site Schiff-base intermediate with substrate; via pyruvic acid; for decarboxylase activity is the S226. Position 226 is a pyruvic acid (Ser); by autocatalysis (S226).

Belongs to the phosphatidylserine decarboxylase family. PSD-B subfamily. Prokaryotic type I sub-subfamily. As to quaternary structure, heterodimer of a large membrane-associated beta subunit and a small pyruvoyl-containing alpha subunit. Pyruvate serves as cofactor. In terms of processing, is synthesized initially as an inactive proenzyme. Formation of the active enzyme involves a self-maturation process in which the active site pyruvoyl group is generated from an internal serine residue via an autocatalytic post-translational modification. Two non-identical subunits are generated from the proenzyme in this reaction, and the pyruvate is formed at the N-terminus of the alpha chain, which is derived from the carboxyl end of the proenzyme. The autoendoproteolytic cleavage occurs by a canonical serine protease mechanism, in which the side chain hydroxyl group of the serine supplies its oxygen atom to form the C-terminus of the beta chain, while the remainder of the serine residue undergoes an oxidative deamination to produce ammonia and the pyruvoyl prosthetic group on the alpha chain. During this reaction, the Ser that is part of the protease active site of the proenzyme becomes the pyruvoyl prosthetic group, which constitutes an essential element of the active site of the mature decarboxylase.

The protein localises to the cell membrane. It carries out the reaction a 1,2-diacyl-sn-glycero-3-phospho-L-serine + H(+) = a 1,2-diacyl-sn-glycero-3-phosphoethanolamine + CO2. It functions in the pathway phospholipid metabolism; phosphatidylethanolamine biosynthesis; phosphatidylethanolamine from CDP-diacylglycerol: step 2/2. In terms of biological role, catalyzes the formation of phosphatidylethanolamine (PtdEtn) from phosphatidylserine (PtdSer). The sequence is that of Phosphatidylserine decarboxylase proenzyme from Bacillus cereus (strain AH820).